The following is an 83-amino-acid chain: U20-theraphotoxin-Cg1a 1 (83 aa).

A signal peptide spans 1 to 21; sequence MKVSVLITLAVLGVMFVWTSA. The propeptide occupies 22–47; sequence AELEERGSDQPAWLKSLERIFQSEER. Disulfide bonds link Cys-49-Cys-63, Cys-56-Cys-68, and Cys-62-Cys-76.

Belongs to the neurotoxin 10 (Hwtx-1) family. 40 (Jztx-35) subfamily. Expressed by the venom gland.

The protein localises to the secreted. Functionally, probable ion channel inhibitor. This Chilobrachys guangxiensis (Chinese earth tiger tarantula) protein is U20-theraphotoxin-Cg1a 1.